The sequence spans 640 residues: MPIITLPDGSQRSFDHPVSVAEVAQSIGAGLAKATLAGKVDGRLVDACDTIERDATLQIITPKDEEGLEIIRHSCAHLVGHAVKQLYPTAKMVIGPVIEEGFYYDIFFERPFTPEDMAAIQQRMRELIDKDYDVIKKMTPRAEVIELFKSRGEDYKLRLIDDMPDEKAMGLYFHEEYVDMCRGPHVPNTRFLKAFQLTKISGAYWRGDSKNEQLQRIYGTAWADKKQLAAYIQRIEEAEKRDHRRIGKQLDLFHLQEEAPGMVFWHPNGWSVYQVLEQYMRKVQRDHGYVEVRTPQVVDRILWERSGHWSNYAENMFTTASESRDYAVKPMNCPCHVQIFNQGLKSYRDLPLRLAEFGACHRNEPSGALHGIMRVRGFTQDDAHIFCTEEQVKKEAADFIKLTLQVYRDFGFTDIAMKLSTRPAKRVGSDELWDRAEGALADALNESGLAWEYQPGEGAFYGPKIEFTLKDCLGRNWQCGTLQYDPNLPERLDASYIAEDNNRKRPVMLHRAILGSFERFIGMLIEHYAGAFPAWLAPTQAVVMNITDKQADFAAEVVRILGESGFRAKSDLRNEKIGFKIREHTLLKVPYLLVIGDREVESKAVAVRTREGEDLGSMPVTQFAELLAQAVSRRGRQDSE.

A TGS domain is found at 1–61 (MPIITLPDGS…ERDATLQIIT (61 aa)). A catalytic region spans residues 242–533 (DHRRIGKQLD…LIEHYAGAFP (292 aa)). Zn(2+) contacts are provided by Cys333, His384, and His510.

Belongs to the class-II aminoacyl-tRNA synthetase family. In terms of assembly, homodimer. Zn(2+) serves as cofactor.

It is found in the cytoplasm. The enzyme catalyses tRNA(Thr) + L-threonine + ATP = L-threonyl-tRNA(Thr) + AMP + diphosphate + H(+). Functionally, catalyzes the attachment of threonine to tRNA(Thr) in a two-step reaction: L-threonine is first activated by ATP to form Thr-AMP and then transferred to the acceptor end of tRNA(Thr). Also edits incorrectly charged L-seryl-tRNA(Thr). This chain is Threonine--tRNA ligase, found in Pseudomonas paraeruginosa (strain DSM 24068 / PA7) (Pseudomonas aeruginosa (strain PA7)).